Here is a 272-residue protein sequence, read N- to C-terminus: Pyrroline-5-carboxylate reductase (272 aa).

It belongs to the pyrroline-5-carboxylate reductase family.

The protein resides in the cytoplasm. It carries out the reaction L-proline + NADP(+) = (S)-1-pyrroline-5-carboxylate + NADPH + 2 H(+). The enzyme catalyses L-proline + NAD(+) = (S)-1-pyrroline-5-carboxylate + NADH + 2 H(+). It participates in amino-acid biosynthesis; L-proline biosynthesis; L-proline from L-glutamate 5-semialdehyde: step 1/1. Its function is as follows. Catalyzes the reduction of 1-pyrroline-5-carboxylate (PCA) to L-proline. This is Pyrroline-5-carboxylate reductase from Vibrio alginolyticus.